A 388-amino-acid polypeptide reads, in one-letter code: Paired box protein Pax-5 (388 aa).

The paired DNA-binding region spans 15–141; sequence RHGGVNQLGG…SSINRIIRTK (127 aa). Residues 18–74 are PAI subdomain; the sequence is GVNQLGGVFVNGRPLPDVVRQRIVELAHQGVRPCDISRQLRVSHGCVSKILGRYYET. Residues 93–141 form an RED subdomain region; sequence KVVDKIADYKRQNPTMFAWEIRDRLLAERVCDNDTVPSVSSINRIIRTK. The span at 143–158 shows a compositional bias: polar residues; the sequence is QQPTNQQIPPSNHSIA. Disordered stretches follow at residues 143 to 162 and 191 to 217; these read QQPT…STGS and AETN…PGRD.

In terms of tissue distribution, first detected in mid-neurula embryos in the folding neural tube. With the completion of neurulation, expression becomes localized to the midbrain/hindbrain boundary (MHB) till at least stage 40. Expression is absent from regions adjacent to the MHB. In tailbuds, weakly and transiently expressed in the developing otic vesicle from stage 21 to stage 27.

It localises to the nucleus. Functionally, probable transcription factor. This Xenopus laevis (African clawed frog) protein is Paired box protein Pax-5.